Consider the following 66-residue polypeptide: MKASDVRALTADQLKEELAKLKKEQFNLRFQKATGQLEKSSRINEVRKDIARVKTIARQKAAEVKA.

This sequence belongs to the universal ribosomal protein uL29 family.

The protein is Large ribosomal subunit protein uL29 of Rhizobium etli (strain ATCC 51251 / DSM 11541 / JCM 21823 / NBRC 15573 / CFN 42).